A 246-amino-acid chain; its full sequence is Probable transcriptional regulatory protein WD_0484 (246 aa).

The interval 1–22 is disordered; that stretch reads MAGHSQFSNIKHRKGAQDAKRS.

This sequence belongs to the TACO1 family.

The protein localises to the cytoplasm. The protein is Probable transcriptional regulatory protein WD_0484 of Wolbachia pipientis wMel.